Reading from the N-terminus, the 230-residue chain is Demethylmenaquinone methyltransferase (230 aa).

S-adenosyl-L-methionine-binding positions include threonine 62, aspartate 80, 100–101 (DG), and serine 117.

Belongs to the class I-like SAM-binding methyltransferase superfamily. MenG/UbiE family.

It catalyses the reaction a 2-demethylmenaquinol + S-adenosyl-L-methionine = a menaquinol + S-adenosyl-L-homocysteine + H(+). The protein operates within quinol/quinone metabolism; menaquinone biosynthesis; menaquinol from 1,4-dihydroxy-2-naphthoate: step 2/2. In terms of biological role, methyltransferase required for the conversion of demethylmenaquinol (DMKH2) to menaquinol (MKH2). In Corynebacterium urealyticum (strain ATCC 43042 / DSM 7109), this protein is Demethylmenaquinone methyltransferase.